The chain runs to 417 residues: Carbohydrate sulfotransferase 8 (417 aa).

The Cytoplasmic portion of the chain corresponds to 1–10; that stretch reads MTPRLGTMRL. Residues 11-31 traverse the membrane as a helical; Signal-anchor for type II membrane protein segment; the sequence is ACMFSSILLFGAAGLLLFISL. Over 32-417 the chain is Lumenal; it reads QDPIELSPQQ…NYSKPFSDLY (386 aa). The disordered stretch occupies residues 47–101; it reads FSIRPQQPQHDSHLRISTEKGTRDSPSGSPRGLQLQAPDQPRPHPKAAGSPLRLR. Positions 56–69 are enriched in basic and acidic residues; the sequence is HDSHLRISTEKGTR. N-linked (GlcNAc...) asparagine glycans are attached at residues N121 and N122. Residues 191–197 and 251–259 each bind 3'-phosphoadenylyl sulfate; these read PKAGCSN and REPFERLVS. N-linked (GlcNAc...) asparagine glycosylation is found at N287, N360, and N408.

Belongs to the sulfotransferase 2 family. As to expression, strongly expressed in brain. Weakly expressed in lung and kidney. Weakly expressed in pituitary.

The protein localises to the golgi apparatus membrane. In terms of biological role, catalyzes the transfer of sulfate to position 4 of non-reducing N-acetylgalactosamine (GalNAc) residues in both N-glycans and O-glycans. Required for biosynthesis of glycoprotein hormones lutropin and thyrotropin, by mediating sulfation of their carbohydrate structures. Only active against terminal GalNAcbeta1,GalNAcbeta. Not active toward chondroitin. The protein is Carbohydrate sulfotransferase 8 (Chst8) of Mus musculus (Mouse).